The primary structure comprises 420 residues: Serine hydroxymethyltransferase (420 aa).

(6S)-5,6,7,8-tetrahydrofolate-binding positions include Leu117 and 121-123; that span reads GHL. Lys226 carries the post-translational modification N6-(pyridoxal phosphate)lysine.

The protein belongs to the SHMT family. Homodimer. It depends on pyridoxal 5'-phosphate as a cofactor.

The protein localises to the cytoplasm. The enzyme catalyses (6R)-5,10-methylene-5,6,7,8-tetrahydrofolate + glycine + H2O = (6S)-5,6,7,8-tetrahydrofolate + L-serine. It participates in one-carbon metabolism; tetrahydrofolate interconversion. Its pathway is amino-acid biosynthesis; glycine biosynthesis; glycine from L-serine: step 1/1. Functionally, catalyzes the reversible interconversion of serine and glycine with tetrahydrofolate (THF) serving as the one-carbon carrier. This reaction serves as the major source of one-carbon groups required for the biosynthesis of purines, thymidylate, methionine, and other important biomolecules. Also exhibits THF-independent aldolase activity toward beta-hydroxyamino acids, producing glycine and aldehydes, via a retro-aldol mechanism. The sequence is that of Serine hydroxymethyltransferase from Rhodopirellula baltica (strain DSM 10527 / NCIMB 13988 / SH1).